A 258-amino-acid polypeptide reads, in one-letter code: Transcription factor TT2 (258 aa).

HTH myb-type domains follow at residues 11–63 (REEL…KNYL) and 64–118 (RPGI…RKRL). 2 DNA-binding regions (H-T-H motif) span residues 39 to 63 (WSTL…KNYL) and 91 to 114 (WSLI…NSNL). 47 to 54 (GLKRCGKS) is a binding site for ATP.

Interacts with BHLH2/EGL3/MYC146, BHLH12/MYC1 and BHLH42/TT8. In terms of tissue distribution, expressed at a high level in immature siliques and at a lower level in flowers. Undetected in young seedlings, roots, leaves and inflorescence stems.

Its subcellular location is the nucleus. Its function is as follows. Transcription activator, when associated with BHLH2/EGL3/MYC146, BHLH12/MYC1, or BHLH42/TT8. Involved in the control of flavonoid late metabolism in developing siliques. Plays a key role in determining the tissue-specific activation of leucoanthocyanidin reductase (BANYULS). This Arabidopsis thaliana (Mouse-ear cress) protein is Transcription factor TT2 (TT2).